Consider the following 525-residue polypeptide: uncharacterized protein (525 aa).

Composition is skewed to polar residues over residues 139–149 and 336–349; these read LNSTPDKTQAG and SGKT…HTTS. Disordered regions lie at residues 139 to 158 and 330 to 356; these read LNST…HQAP and PAPA…PYAT.

This is an uncharacterized protein from Treponema pallidum (strain Nichols).